A 251-amino-acid chain; its full sequence is MRRPMVAGNWKMHGTRASVAELTKGLSNLALPSGVEVAVFPPALFINQVIDGLAGKEITVGAQNSAVQPEQGALTGEVAPEQLVEAGCKLVLIGHSERRQIIGETDEVLNRKFAAAQAKGLKPVLCIGETLEEREAGKTLEVVGRQLSSIIEAFGVKAFADAVIAYEPVWAIGTGLTATPQQAQDVHAAIRGQLAAEDAEVAAKVQLLYGGSVKAANAAELFGMPDIDGGLIGGASLNADEFGAICRAAGN.

Residue 9-11 coordinates substrate; sequence NWK. H95 serves as the catalytic Electrophile. The active-site Proton acceptor is E167. Substrate contacts are provided by residues G173, S212, and 233 to 234; that span reads GG.

The protein belongs to the triosephosphate isomerase family. As to quaternary structure, homodimer.

It is found in the cytoplasm. It catalyses the reaction D-glyceraldehyde 3-phosphate = dihydroxyacetone phosphate. It participates in carbohydrate biosynthesis; gluconeogenesis. The protein operates within carbohydrate degradation; glycolysis; D-glyceraldehyde 3-phosphate from glycerone phosphate: step 1/1. Involved in the gluconeogenesis. Catalyzes stereospecifically the conversion of dihydroxyacetone phosphate (DHAP) to D-glyceraldehyde-3-phosphate (G3P). This chain is Triosephosphate isomerase, found in Pseudomonas putida (strain ATCC 700007 / DSM 6899 / JCM 31910 / BCRC 17059 / LMG 24140 / F1).